A 228-amino-acid chain; its full sequence is Ribose-5-phosphate isomerase A (228 aa).

Substrate is bound by residues 28–31 (TGST), 84–87 (DGAD), and 97–100 (KGGG). The Proton acceptor role is filled by glutamate 106. Residue lysine 124 participates in substrate binding.

This sequence belongs to the ribose 5-phosphate isomerase family. In terms of assembly, homodimer.

The catalysed reaction is aldehydo-D-ribose 5-phosphate = D-ribulose 5-phosphate. The protein operates within carbohydrate degradation; pentose phosphate pathway; D-ribose 5-phosphate from D-ribulose 5-phosphate (non-oxidative stage): step 1/1. Its function is as follows. Catalyzes the reversible conversion of ribose-5-phosphate to ribulose 5-phosphate. The chain is Ribose-5-phosphate isomerase A from Levilactobacillus brevis (strain ATCC 367 / BCRC 12310 / CIP 105137 / JCM 1170 / LMG 11437 / NCIMB 947 / NCTC 947) (Lactobacillus brevis).